A 742-amino-acid chain; its full sequence is Photosystem I P700 chlorophyll a apoprotein A2 (742 aa).

The next 8 helical transmembrane spans lie at leucine 46 to alanine 69, leucine 135 to glutamine 158, leucine 175 to isoleucine 199, isoleucine 273 to tyrosine 291, leucine 336 to glycine 359, serine 375 to valine 401, alanine 423 to histidine 445, and phenylalanine 525 to isoleucine 543. Cysteine 567 and cysteine 576 together coordinate [4Fe-4S] cluster. The next 2 helical transmembrane spans lie at alanine 583 to tryptophan 604 and leucine 651 to isoleucine 673. The divinyl chlorophyll a site is built by histidine 662, methionine 670, and tyrosine 678. Tryptophan 679 contributes to the phylloquinone binding site. Residues leucine 715–alanine 735 form a helical membrane-spanning segment.

It belongs to the PsaA/PsaB family. The PsaA/B heterodimer binds the P700 divinyl chlorophyll special pair and subsequent electron acceptors. PSI consists of a core antenna complex that captures photons, and an electron transfer chain that converts photonic excitation into a charge separation. The cyanobacterial PSI reaction center is composed of one copy each of PsaA,B,C,D,E,F,I,J,K,L,M and X, and forms trimeric complexes. PSI electron transfer chain: 5 divinyl chlorophyll a, 1 divinyl chlorophyll a', 2 phylloquinones and 3 4Fe-4S clusters. PSI core antenna: 90 divinyl chlorophyll a, 22 carotenoids, 3 phospholipids and 1 galactolipid. P700 is a divinyl chlorophyll a/divinyl chlorophyll a' dimer, A0 is one or more divinyl chlorophyll a, A1 is one or both phylloquinones and FX is a shared 4Fe-4S iron-sulfur center. is required as a cofactor.

The protein localises to the cellular thylakoid membrane. The catalysed reaction is reduced [plastocyanin] + hnu + oxidized [2Fe-2S]-[ferredoxin] = oxidized [plastocyanin] + reduced [2Fe-2S]-[ferredoxin]. Its function is as follows. PsaA and PsaB bind P700, the primary electron donor of photosystem I (PSI), as well as the electron acceptors A0, A1 and FX. PSI is a plastocyanin/cytochrome c6-ferredoxin oxidoreductase, converting photonic excitation into a charge separation, which transfers an electron from the donor P700 chlorophyll pair to the spectroscopically characterized acceptors A0, A1, FX, FA and FB in turn. Oxidized P700 is reduced on the lumenal side of the thylakoid membrane by plastocyanin or cytochrome c6. The polypeptide is Photosystem I P700 chlorophyll a apoprotein A2 (Prochlorococcus marinus (strain MIT 9312)).